The primary structure comprises 837 residues: Periplasmic nitrate reductase (837 aa).

The tat-type signal signal peptide spans 1-33 (MTTPKLDRRQVLKLEAAAMAALAGGIAMPAAAA). Residues 44-100 (LKWDKAACRFCGTGCSVMVATKENRVVATHGDTKSEVNRGLNCVKGYFLSKIMYGHD) enclose the 4Fe-4S Mo/W bis-MGD-type domain. 4 residues coordinate [4Fe-4S] cluster: C51, C54, C58, and C86. Residues K88, Q155, N180, C184, 217–224 (WGSNMAEM), 248–252 (STFEH), 267–269 (QTD), M378, Q382, N488, 514–515 (SD), K537, D564, and 724–733 (TGRVLEHWHS) each bind Mo-bis(molybdopterin guanine dinucleotide). W800 provides a ligand contact to substrate. Mo-bis(molybdopterin guanine dinucleotide) contacts are provided by N808 and K825.

It belongs to the prokaryotic molybdopterin-containing oxidoreductase family. NasA/NapA/NarB subfamily. As to quaternary structure, component of the periplasmic nitrate reductase NapAB complex composed of NapA and NapB. [4Fe-4S] cluster is required as a cofactor. Mo-bis(molybdopterin guanine dinucleotide) serves as cofactor. Predicted to be exported by the Tat system. The position of the signal peptide cleavage has not been experimentally proven.

Its subcellular location is the periplasm. The catalysed reaction is 2 Fe(II)-[cytochrome] + nitrate + 2 H(+) = 2 Fe(III)-[cytochrome] + nitrite + H2O. Catalytic subunit of the periplasmic nitrate reductase complex NapAB. Receives electrons from NapB and catalyzes the reduction of nitrate to nitrite. In Rhodopseudomonas palustris (strain BisB18), this protein is Periplasmic nitrate reductase.